The following is a 174-amino-acid chain: Gamma-crystallin C (174 aa).

Beta/gamma crystallin 'Greek key' domains are found at residues 2–40 (GKITFYEDRAFQGRSYETTTDCPNLQPYFSRCNSIRVES) and 41–83 (GCWM…CLIP). C23 bears the S-methylcysteine mark. The interval 84 to 87 (QTVS) is connecting peptide. Beta/gamma crystallin 'Greek key' domains are found at residues 88-128 (HRLR…HVLE) and 129-171 (GCWV…RRVV).

It belongs to the beta/gamma-crystallin family. Monomer.

Its function is as follows. Crystallins are the dominant structural components of the vertebrate eye lens. This is Gamma-crystallin C (CRYGC) from Homo sapiens (Human).